A 198-amino-acid polypeptide reads, in one-letter code: Neutrophil gelatinase-associated lipocalin (198 aa).

The first 20 residues, 1–20, serve as a signal peptide directing secretion; that stretch reads MGLGVLCLALVLLGVLQSQA. Residue Gln21 is modified to Pyrrolidone carboxylic acid. Position 72-74 (72-74) interacts with a carboxymycobactin; that stretch reads YST. Asn85 carries N-linked (GlcNAc...) asparagine glycosylation. Cys96 and Cys195 are joined by a disulfide. Tyr126 contacts enterobactin. 3 residues coordinate a carboxymycobactin: Lys145, Lys154, and Tyr158. Position 154 (Lys154) interacts with enterobactin.

Belongs to the calycin superfamily. Lipocalin family. Monomer. Homodimer; disulfide-linked. Heterodimer; disulfide-linked with MMP9. In terms of tissue distribution, detected in the ureteric bud in embryonic kidney (at protein level).

The protein resides in the secreted. The protein localises to the cytoplasmic granule lumen. It localises to the cytoplasmic vesicle lumen. Its function is as follows. Iron-trafficking protein involved in multiple processes such as apoptosis, innate immunity and renal development. Binds iron through association with 2,3-dihydroxybenzoic acid (2,3-DHBA), a siderophore that shares structural similarities with bacterial enterobactin, and delivers or removes iron from the cell, depending on the context. Iron-bound form (holo-24p3) is internalized following binding to the SLC22A17 (24p3R) receptor, leading to release of iron and subsequent increase of intracellular iron concentration. In contrast, association of the iron-free form (apo-24p3) with the SLC22A17 (24p3R) receptor is followed by association with an intracellular siderophore, iron chelation and iron transfer to the extracellular medium, thereby reducing intracellular iron concentration. Involved in apoptosis due to interleukin-3 (IL3) deprivation: iron-loaded form increases intracellular iron concentration without promoting apoptosis, while iron-free form decreases intracellular iron levels, inducing expression of the proapoptotic protein BCL2L11/BIM, resulting in apoptosis. Involved in innate immunity; limits bacterial proliferation by sequestering iron bound to microbial siderophores, such as enterobactin. Can also bind siderophores from M.tuberculosis. This Rattus norvegicus (Rat) protein is Neutrophil gelatinase-associated lipocalin (Lcn2).